The following is a 264-amino-acid chain: Thymidylate synthase (264 aa).

DUMP-binding positions include arginine 21 and 126 to 127 (RR). Cysteine 146 functions as the Nucleophile in the catalytic mechanism. DUMP contacts are provided by residues 166–169 (RSAD), asparagine 177, and 207–209 (HLY). Position 169 (aspartate 169) interacts with (6R)-5,10-methylene-5,6,7,8-tetrahydrofolate. Alanine 263 lines the (6R)-5,10-methylene-5,6,7,8-tetrahydrofolate pocket.

Belongs to the thymidylate synthase family. Bacterial-type ThyA subfamily. Homodimer.

The protein localises to the cytoplasm. The catalysed reaction is dUMP + (6R)-5,10-methylene-5,6,7,8-tetrahydrofolate = 7,8-dihydrofolate + dTMP. It participates in pyrimidine metabolism; dTTP biosynthesis. Catalyzes the reductive methylation of 2'-deoxyuridine-5'-monophosphate (dUMP) to 2'-deoxythymidine-5'-monophosphate (dTMP) while utilizing 5,10-methylenetetrahydrofolate (mTHF) as the methyl donor and reductant in the reaction, yielding dihydrofolate (DHF) as a by-product. This enzymatic reaction provides an intracellular de novo source of dTMP, an essential precursor for DNA biosynthesis. The polypeptide is Thymidylate synthase (Afipia carboxidovorans (strain ATCC 49405 / DSM 1227 / KCTC 32145 / OM5) (Oligotropha carboxidovorans)).